The primary structure comprises 574 residues: Bifunctional NADP phosphatase/NAD kinase (574 aa).

The tract at residues Met1 to Trp297 is NADP phosphatase. Mg(2+) contacts are provided by Glu69, Asp87, Ile89, Asp90, and Asp243. The NAD kinase stretch occupies residues Val302–Lys574. Residue Asp362 is the Proton acceptor of the active site. NAD(+) contacts are provided by residues Asp362–Gly363, Arg367, Asn436–Glu437, Lys447, Arg464, Asp466, and Thr477–Ser482.

This sequence in the N-terminal section; belongs to the inositol monophosphatase superfamily. The protein in the C-terminal section; belongs to the NAD kinase family. In terms of assembly, homotetramer. Mg(2+) is required as a cofactor.

It localises to the cytoplasm. It carries out the reaction NAD(+) + ATP = ADP + NADP(+) + H(+). The enzyme catalyses NADP(+) + H2O = phosphate + NAD(+). It catalyses the reaction UTP + NAD(+) = UDP + NADP(+) + H(+). The catalysed reaction is 5-methyl-UTP + NAD(+) = 5-methyl-UDP + NADP(+) + H(+). It carries out the reaction CTP + NAD(+) = CDP + NADP(+) + H(+). The enzyme catalyses GTP + NAD(+) = GDP + NADP(+) + H(+). It catalyses the reaction dATP + NAD(+) = dADP + NADP(+) + H(+). The catalysed reaction is NADPH + H2O = phosphate + NADH. It carries out the reaction adenosine 2'-phosphate + H2O = adenosine + phosphate. The enzyme catalyses beta-D-fructose 1,6-bisphosphate + H2O = beta-D-fructose 6-phosphate + phosphate. Its activity is regulated as follows. Phosphatase activity is slightly inhibited by ADP, NADH and ATP, and moderately inhibited by NAD and 5'-AMP. Kinase activity is slightly inhibited by ADP and NADP. Involved in the regulation of the intracellular balance between NAD(H) and NADP(H), and is a key enzyme in the biosynthesis of NADP. Catalyzes the phosphorylation and dephosphorylation of NAD and NADP, respectively. Although it shows conflicting dual activities and is able to supply NADP, it seems that its physiological role is to prevent excess accumulation of NADP. Kinase can use ATP and other nucleoside triphosphates (UTP, TTP, CTP, GTP) as well as inorganic polyphosphate (poly(P)) as phosphoryl donors, however poly(P) is not considered to be the physiological phosphoryl donor. NAD is the preferred substrate for the kinase, but NADH can also be used as phosphoryl acceptor. Phosphatase can use NADP or NADPH as phosphoryl donor, but NADP is the preferred substrate. Phosphatase also has an activity toward the terminal phosphate group at C-2 of adenosine in 2'-AMP and toward the phosphate group at C-1 of fructose 1,6-bisphosphate, but not toward inositol 1-phosphate. The sequence is that of Bifunctional NADP phosphatase/NAD kinase from Methanocaldococcus jannaschii (strain ATCC 43067 / DSM 2661 / JAL-1 / JCM 10045 / NBRC 100440) (Methanococcus jannaschii).